A 380-amino-acid chain; its full sequence is Cytochrome b (380 aa).

4 consecutive transmembrane segments (helical) span residues 34 to 54, 78 to 99, 114 to 134, and 179 to 199; these read FGSL…FLAM, WLIR…YLHI, WNIG…GYVL, and FFTF…VHLL. Heme b-binding residues include histidine 84 and histidine 98. The heme b site is built by histidine 183 and histidine 197. Histidine 202 contributes to the a ubiquinone binding site. 4 consecutive transmembrane segments (helical) span residues 227-247, 289-309, 321-341, and 348-368; these read YKDL…ALFT, LGGV…PILH, ISQL…WIGG, and FITI…ILFP.

This sequence belongs to the cytochrome b family. As to quaternary structure, the cytochrome bc1 complex contains 3 respiratory subunits (MT-CYB, CYC1 and UQCRFS1), 2 core proteins (UQCRC1 and UQCRC2) and probably 6 low-molecular weight proteins. The cofactor is heme b.

It localises to the mitochondrion inner membrane. Component of the ubiquinol-cytochrome c reductase complex (complex III or cytochrome b-c1 complex) that is part of the mitochondrial respiratory chain. The b-c1 complex mediates electron transfer from ubiquinol to cytochrome c. Contributes to the generation of a proton gradient across the mitochondrial membrane that is then used for ATP synthesis. In Pastinachus sephen (Cowtail stingray), this protein is Cytochrome b (mt-cyb).